The primary structure comprises 430 residues: GTPase Obg (430 aa).

The Obg domain maps to 1–158 (MFVDQVKISL…LDVSLELKLL (158 aa)). Residues 118–145 (KGGRGGRGNSRFATPRNPAPDFSEKGEP) form a disordered region. Positions 159 to 329 (ADVGLVGFPS…LLYAIADKLE (171 aa)) constitute an OBG-type G domain. GTP-binding positions include 165–172 (GFPSVGKS), 190–194 (FTTIK), 212–215 (DLPG), 282–285 (NKMD), and 310–312 (STI). Mg(2+) contacts are provided by serine 172 and threonine 192. One can recognise an OCT domain in the interval 352 to 430 (KHTPSQDKFT…ILGGEFEFVE (79 aa)).

The protein belongs to the TRAFAC class OBG-HflX-like GTPase superfamily. OBG GTPase family. As to quaternary structure, monomer. It depends on Mg(2+) as a cofactor.

It is found in the cytoplasm. Its function is as follows. An essential GTPase which binds GTP, GDP and possibly (p)ppGpp with moderate affinity, with high nucleotide exchange rates and a fairly low GTP hydrolysis rate. Plays a role in control of the cell cycle, stress response, ribosome biogenesis and in those bacteria that undergo differentiation, in morphogenesis control. The chain is GTPase Obg from Staphylococcus aureus (strain COL).